A 514-amino-acid polypeptide reads, in one-letter code: Threonine synthase (514 aa).

The residue at position 117 (Lys-117) is an N6-(pyridoxal phosphate)lysine. 4 residues coordinate pyridoxal 5'-phosphate: Gly-270, Asn-271, Phe-272, and Asp-274. A phosphoserine mark is found at Ser-319 and Ser-321. Thr-449 serves as a coordination point for pyridoxal 5'-phosphate.

Belongs to the threonine synthase family. It depends on pyridoxal 5'-phosphate as a cofactor.

The enzyme catalyses O-phospho-L-homoserine + H2O = L-threonine + phosphate. The protein operates within amino-acid biosynthesis; L-threonine biosynthesis; L-threonine from L-aspartate: step 5/5. In terms of biological role, catalyzes the gamma-elimination of phosphate from L-phosphohomoserine and the beta-addition of water to produce L-threonine. The sequence is that of Threonine synthase (thrc) from Schizosaccharomyces pombe (strain 972 / ATCC 24843) (Fission yeast).